The sequence spans 169 residues: Transmembrane protein 89 (169 aa).

Positions 1 to 22 are cleaved as a signal peptide; that stretch reads MLYTLLLVPSLFLLVMPVPSQG. Topologically, residues 23 to 75 are extracellular; that stretch reads WSRPLWYQVGLDLQPWGCQPNSPDIWGCQPNSLDSCKNSLGCPGYWLGLGGNR. A helical membrane pass occupies residues 76 to 96; the sequence is IYPVAGVTITTTMLLVVSRVI. Residues 97–169 are Cytoplasmic-facing; it reads VHRWRAKVAK…QIKGSPPQSG (73 aa).

It localises to the membrane. The protein is Transmembrane protein 89 (Tmem89) of Mus musculus (Mouse).